Consider the following 269-residue polypeptide: GTP cyclohydrolase FolE2 2 (269 aa).

This sequence belongs to the GTP cyclohydrolase IV family.

It catalyses the reaction GTP + H2O = 7,8-dihydroneopterin 3'-triphosphate + formate + H(+). Its pathway is cofactor biosynthesis; 7,8-dihydroneopterin triphosphate biosynthesis; 7,8-dihydroneopterin triphosphate from GTP: step 1/1. Functionally, converts GTP to 7,8-dihydroneopterin triphosphate. In Burkholderia lata (strain ATCC 17760 / DSM 23089 / LMG 22485 / NCIMB 9086 / R18194 / 383), this protein is GTP cyclohydrolase FolE2 2.